The sequence spans 396 residues: Arginine biosynthesis bifunctional protein ArgJ (396 aa).

Residues T150, K177, T188, E267, N391, and T396 each contribute to the substrate site. T188 functions as the Nucleophile in the catalytic mechanism.

This sequence belongs to the ArgJ family. In terms of assembly, heterotetramer of two alpha and two beta chains.

The protein resides in the cytoplasm. It catalyses the reaction N(2)-acetyl-L-ornithine + L-glutamate = N-acetyl-L-glutamate + L-ornithine. The enzyme catalyses L-glutamate + acetyl-CoA = N-acetyl-L-glutamate + CoA + H(+). Its pathway is amino-acid biosynthesis; L-arginine biosynthesis; L-ornithine and N-acetyl-L-glutamate from L-glutamate and N(2)-acetyl-L-ornithine (cyclic): step 1/1. It functions in the pathway amino-acid biosynthesis; L-arginine biosynthesis; N(2)-acetyl-L-ornithine from L-glutamate: step 1/4. Catalyzes two activities which are involved in the cyclic version of arginine biosynthesis: the synthesis of N-acetylglutamate from glutamate and acetyl-CoA as the acetyl donor, and of ornithine by transacetylation between N(2)-acetylornithine and glutamate. This is Arginine biosynthesis bifunctional protein ArgJ from Wolinella succinogenes (strain ATCC 29543 / DSM 1740 / CCUG 13145 / JCM 31913 / LMG 7466 / NCTC 11488 / FDC 602W) (Vibrio succinogenes).